A 361-amino-acid chain; its full sequence is Hsc70-interacting protein (361 aa).

Residues 39-98 (GGTIPPAPASTSTDETSKGKAEEQPEEPVKSPEPESEESDLEIDNEGVIEPDNDDPQEMG) are disordered. The segment covering 53-71 (ETSKGKAEEQPEEPVKSPE) has biased composition (basic and acidic residues). Positions 72 to 98 (PESEESDLEIDNEGVIEPDNDDPQEMG) are enriched in acidic residues. TPR repeat units follow at residues 112–145 (ANEK…NPCL), 147–179 (ILYA…NPDS), and 181–213 (QTYK…DYDE). Basic and acidic residues predominate over residues 254 to 270 (KAREEHERAQREEEARR). Residues 254-292 (KAREEHERAQREEEARRQAGGAQFGGFPGGFPGGFPGAM) form a disordered region. A compositionally biased stretch (gly residues) spans 275–292 (AQFGGFPGGFPGGFPGAM). One can recognise an STI1 domain in the interval 311–350 (DPEVLAAMQDPEVMAAFQDVAQNPANMSKYQNNPKVMSLI).

Belongs to the FAM10 family. As to quaternary structure, homotetramer. Interacts with HSC70 as well as DNAJ homologs and HSP90.

Its subcellular location is the cytoplasm. One HIP oligomer binds the ATPase domains of at least two HSC70 molecules dependent on activation of the HSC70 ATPase by HSP40. Stabilizes the ADP state of HSC70 that has a high affinity for substrate protein. Through its own chaperone activity, it may contribute to the interaction of HSC70 with various target proteins. The chain is Hsc70-interacting protein (ST13) from Gallus gallus (Chicken).